We begin with the raw amino-acid sequence, 96 residues long: Ubiquitin-like protein NEDD8-like protein 1 (96 aa).

Positions 75 to 96 (SQSDNSEKSEKSGKSEKDCILM) are disordered. Positions 79 to 96 (NSEKSEKSGKSEKDCILM) are enriched in basic and acidic residues.

It belongs to the ubiquitin family.

In Dictyostelium discoideum (Social amoeba), this protein is Ubiquitin-like protein NEDD8-like protein 1 (nedd8l1).